Here is a 224-residue protein sequence, read N- to C-terminus: UPF0758 protein PFL_6051 (224 aa).

Residues 102-224 (ALENPLVVRD…PLSMAEYGWI (123 aa)) form the MPN domain. 3 residues coordinate Zn(2+): His-173, His-175, and Asp-186. A JAMM motif motif is present at residues 173–186 (HNHPSGICEPSPAD).

Belongs to the UPF0758 family.

This Pseudomonas fluorescens (strain ATCC BAA-477 / NRRL B-23932 / Pf-5) protein is UPF0758 protein PFL_6051.